Here is a 607-residue protein sequence, read N- to C-terminus: Glutamine--fructose-6-phosphate aminotransferase [isomerizing] (607 aa).

Catalysis depends on Cys-2, which acts as the Nucleophile; for GATase activity. Residues 2–217 (CGIIGILGKK…DGDWAVLTRE (216 aa)) form the Glutamine amidotransferase type-2 domain. SIS domains are found at residues 277-422 (TVRS…QRGS) and 455-597 (ICRD…VDQP). Lys-602 functions as the For Fru-6P isomerization activity in the catalytic mechanism.

In terms of assembly, homodimer.

The protein localises to the cytoplasm. The catalysed reaction is D-fructose 6-phosphate + L-glutamine = D-glucosamine 6-phosphate + L-glutamate. Functionally, catalyzes the first step in hexosamine metabolism, converting fructose-6P into glucosamine-6P using glutamine as a nitrogen source. The chain is Glutamine--fructose-6-phosphate aminotransferase [isomerizing] from Bartonella quintana (strain Toulouse) (Rochalimaea quintana).